The chain runs to 504 residues: Probable alpha-L-arabinofuranosidase C (504 aa).

4 N-linked (GlcNAc...) asparagine glycosylation sites follow: Asn-152, Asn-181, Asn-269, and Asn-467.

Belongs to the glycosyl hydrolase 51 family.

The protein resides in the secreted. The catalysed reaction is Hydrolysis of terminal non-reducing alpha-L-arabinofuranoside residues in alpha-L-arabinosides.. The protein operates within glycan metabolism; L-arabinan degradation. Alpha-L-arabinofuranosidase involved in the degradation of arabinoxylan, a major component of plant hemicellulose. Acts only on small linear 1,5-alpha-linked L-arabinofuranosyl oligosaccharides. This Aspergillus terreus (strain NIH 2624 / FGSC A1156) protein is Probable alpha-L-arabinofuranosidase C (abfC).